The primary structure comprises 356 residues: S-adenosylmethionine:tRNA ribosyltransferase-isomerase (356 aa).

The protein belongs to the QueA family. As to quaternary structure, monomer.

It localises to the cytoplasm. It carries out the reaction 7-aminomethyl-7-carbaguanosine(34) in tRNA + S-adenosyl-L-methionine = epoxyqueuosine(34) in tRNA + adenine + L-methionine + 2 H(+). It participates in tRNA modification; tRNA-queuosine biosynthesis. Functionally, transfers and isomerizes the ribose moiety from AdoMet to the 7-aminomethyl group of 7-deazaguanine (preQ1-tRNA) to give epoxyqueuosine (oQ-tRNA). The polypeptide is S-adenosylmethionine:tRNA ribosyltransferase-isomerase (Serratia proteamaculans (strain 568)).